The following is an 838-amino-acid chain: Shutoff protein (838 aa).

The tract at residues 1–102 (MEDQHSAASE…EQEEDSPDRY (102 aa)) is disordered. Pro residues predominate over residues 18-35 (TLPPPPPPPPPPTSPPPS). The span at 52 to 65 (TCSSSSSSSASSEC) shows a compositional bias: low complexity. A binding to host EIF4G region spans residues 291 to 353 (LMQTLLVRRA…ACMVTVQLHC (63 aa)). Residues 356–474 (TFLTSREMVR…SLWTGFDERT (119 aa)) enclose the RRM domain. Phosphotyrosine; by host occurs at positions 373 and 690. The interval 693 to 838 (PHTGEELNTA…QELRRPQRGS (146 aa)) is disordered. Residues 701–710 (TAAPSTAHHA) are compositionally biased toward low complexity. Composition is skewed to basic and acidic residues over residues 737–746 (SYADRVRSEL) and 770–787 (HSRD…DQRQ). Residues 813-829 (QALLHQQQQQQEHQPAQ) show a composition bias toward low complexity.

It belongs to the adenoviridae shutoff protein family. Monomer. Interacts with hexon protein; this interaction allows chaperoning and trimerization of hexon proteins. Interacts (via N-terminus) with host initiation factor EIF4G (via C-terminus). Interacts (via RRM domain) with viral mRNAs that contain the tripartite leader; this interaction allows ribosome shunting and expression of viral late mRNAs. Might be cleaved by the viral protease. In terms of processing, phosphorylated. Tyrosine phosphorylation enhances preferential binding to tripartite leader mRNAs and allows ribosome shunting. Post-translationally, methylated. Asymmetric dimethylation by host PRMT1 of the Arg/Gly-rich region may regulate shutoff protein binding to hexon and promote the capsid assembly in the nucleus.

It localises to the host cytoplasm. Functionally, protein that inhibits host translation while promoting late viral translation by ribosome shunting. Blocks host cap-dependent translation by binding to eIF4G, displacing MKNK1 from cap initiation complexes and preventing EIF4E phosphorylation. Binds to the tripartite leader sequence of viral late mRNAs and recruits host eIF4G, PABPC1/poly-A binding protein and 40S ribosomes subunits on viral mRNAs, allowing ribosome shunting and efficient translation of late viral mRNAs even though conventional translation via ribosome scanning from the cap has been shut off in the host cell. During assembly, acts as a chaperone protein that helps hexon proteins assembly into trimers. This Porcine adenovirus A serotype 3 (PAdV-3) protein is Shutoff protein.